The following is a 483-amino-acid chain: GTPase Der (483 aa).

EngA-type G domains follow at residues 3 to 167 and 212 to 387; these read FTLA…GEER and LRIA…EIWN. Residues 9–16, 56–60, 119–122, 218–225, 265–269, and 330–333 contribute to the GTP site; these read GRPNVGKS, DTAGL, NKAE, GRPNAGKS, DTAGM, and NKWD. The KH-like domain occupies 388-472; it reads RRISTGRLNR…PIRLSLRTSD (85 aa).

Belongs to the TRAFAC class TrmE-Era-EngA-EngB-Septin-like GTPase superfamily. EngA (Der) GTPase family. In terms of assembly, associates with the 50S ribosomal subunit.

Its function is as follows. GTPase that plays an essential role in the late steps of ribosome biogenesis. In Brucella suis biovar 1 (strain 1330), this protein is GTPase Der.